A 355-amino-acid polypeptide reads, in one-letter code: S-adenosylmethionine:tRNA ribosyltransferase-isomerase (355 aa).

It belongs to the QueA family. In terms of assembly, monomer.

It is found in the cytoplasm. It carries out the reaction 7-aminomethyl-7-carbaguanosine(34) in tRNA + S-adenosyl-L-methionine = epoxyqueuosine(34) in tRNA + adenine + L-methionine + 2 H(+). The protein operates within tRNA modification; tRNA-queuosine biosynthesis. In terms of biological role, transfers and isomerizes the ribose moiety from AdoMet to the 7-aminomethyl group of 7-deazaguanine (preQ1-tRNA) to give epoxyqueuosine (oQ-tRNA). The chain is S-adenosylmethionine:tRNA ribosyltransferase-isomerase from Photorhabdus laumondii subsp. laumondii (strain DSM 15139 / CIP 105565 / TT01) (Photorhabdus luminescens subsp. laumondii).